The chain runs to 374 residues: Queuine tRNA-ribosyltransferase (374 aa).

Residue Asp89 is the Proton acceptor of the active site. Residues 89 to 93, Asp143, Gln185, and Gly212 each bind substrate; that span reads DSGGF. The tract at residues 243 to 249 is RNA binding; that stretch reads GVGKPED. Asp262 functions as the Nucleophile in the catalytic mechanism. Residues 267–271 form an RNA binding; important for wobble base 34 recognition region; it reads TRNAR. Residues Cys300, Cys302, Cys305, and His331 each coordinate Zn(2+).

It belongs to the queuine tRNA-ribosyltransferase family. In terms of assembly, homodimer. Within each dimer, one monomer is responsible for RNA recognition and catalysis, while the other monomer binds to the replacement base PreQ1. The cofactor is Zn(2+).

It carries out the reaction 7-aminomethyl-7-carbaguanine + guanosine(34) in tRNA = 7-aminomethyl-7-carbaguanosine(34) in tRNA + guanine. The protein operates within tRNA modification; tRNA-queuosine biosynthesis. Its function is as follows. Catalyzes the base-exchange of a guanine (G) residue with the queuine precursor 7-aminomethyl-7-deazaguanine (PreQ1) at position 34 (anticodon wobble position) in tRNAs with GU(N) anticodons (tRNA-Asp, -Asn, -His and -Tyr). Catalysis occurs through a double-displacement mechanism. The nucleophile active site attacks the C1' of nucleotide 34 to detach the guanine base from the RNA, forming a covalent enzyme-RNA intermediate. The proton acceptor active site deprotonates the incoming PreQ1, allowing a nucleophilic attack on the C1' of the ribose to form the product. After dissociation, two additional enzymatic reactions on the tRNA convert PreQ1 to queuine (Q), resulting in the hypermodified nucleoside queuosine (7-(((4,5-cis-dihydroxy-2-cyclopenten-1-yl)amino)methyl)-7-deazaguanosine). The polypeptide is Queuine tRNA-ribosyltransferase (Saccharophagus degradans (strain 2-40 / ATCC 43961 / DSM 17024)).